Here is a 637-residue protein sequence, read N- to C-terminus: 3D-(3,5/4)-trihydroxycyclohexane-1,2-dione hydrolase (637 aa).

Residue Glu-66 participates in thiamine diphosphate binding. Positions 442-522 (SLPGDLQRLW…INILLFDNAG (81 aa)) are thiamine pyrophosphate binding. Mg(2+)-binding residues include Asp-493 and Asn-520.

Belongs to the TPP enzyme family. The cofactor is Mg(2+). It depends on thiamine diphosphate as a cofactor.

It carries out the reaction 3D-3,5/4-trihydroxycyclohexane-1,2-dione + H2O = 5-deoxy-D-glucuronate + H(+). The protein operates within polyol metabolism; myo-inositol degradation into acetyl-CoA; acetyl-CoA from myo-inositol: step 3/7. In terms of biological role, involved in the cleavage of the C1-C2 bond of 3D-(3,5/4)-trihydroxycyclohexane-1,2-dione (THcHDO) to yield 5-deoxy-glucuronate (5DG). In Shouchella clausii (strain KSM-K16) (Alkalihalobacillus clausii), this protein is 3D-(3,5/4)-trihydroxycyclohexane-1,2-dione hydrolase.